A 220-amino-acid polypeptide reads, in one-letter code: Deoxyribose-phosphate aldolase 1 (220 aa).

The Proton donor/acceptor role is filled by D89. K151 acts as the Schiff-base intermediate with acetaldehyde in catalysis. The Proton donor/acceptor role is filled by K180.

It belongs to the DeoC/FbaB aldolase family. DeoC type 1 subfamily.

It is found in the cytoplasm. It catalyses the reaction 2-deoxy-D-ribose 5-phosphate = D-glyceraldehyde 3-phosphate + acetaldehyde. The protein operates within carbohydrate degradation; 2-deoxy-D-ribose 1-phosphate degradation; D-glyceraldehyde 3-phosphate and acetaldehyde from 2-deoxy-alpha-D-ribose 1-phosphate: step 2/2. In terms of biological role, catalyzes a reversible aldol reaction between acetaldehyde and D-glyceraldehyde 3-phosphate to generate 2-deoxy-D-ribose 5-phosphate. The polypeptide is Deoxyribose-phosphate aldolase 1 (Staphylococcus aureus (strain MSSA476)).